The following is a 1077-amino-acid chain: Mitogen-activated protein kinase kinase kinase 9 (1077 aa).

The tract at residues methionine 1–glutamate 40 is disordered. Residues alanine 14 to glycine 27 are compositionally biased toward low complexity. Over residues alanine 28 to alanine 38 the composition is skewed to acidic residues. One can recognise an SH3 domain in the interval alanine 45–alanine 109. Residues leucine 137 to phenylalanine 405 form the Protein kinase domain. ATP contacts are provided by residues isoleucine 143–valine 151 and lysine 164. The active-site Proton acceptor is the aspartate 261. Phosphothreonine; by autocatalysis occurs at positions 297 and 298. The residue at position 301 (serine 301) is a Phosphoserine; by autocatalysis. Phosphothreonine; by autocatalysis is present on threonine 305. 2 leucine-zipper regions span residues isoleucine 423 to leucine 444 and leucine 458 to isoleucine 479. Residues valine 491–leucine 503 show a composition bias toward basic residues. Disordered stretches follow at residues valine 491–isoleucine 511, serine 526–aspartate 606, glutamate 646–glycine 713, leucine 748–glutamate 790, arginine 860–serine 971, and serine 986–serine 1011. Serine 526 carries the phosphoserine modification. Polar residues-rich tracts occupy residues proline 559–arginine 568 and proline 693–leucine 709. Positions proline 755 to leucine 767 are enriched in basic and acidic residues. Residues asparagine 863–serine 880 show a composition bias toward polar residues. Low complexity predominate over residues glycine 901 to glycine 915. Polar residues predominate over residues histidine 987–serine 1011.

Belongs to the protein kinase superfamily. STE Ser/Thr protein kinase family. MAP kinase kinase kinase subfamily. In terms of assembly, homodimer. It depends on Mg(2+) as a cofactor. In terms of processing, autophosphorylation on serine and threonine residues within the activation loop plays a role in enzyme activation. Thr-305 is likely to be the main autophosphorylation site. Autophosphorylation also occurs on Thr-297 and Ser-301. Expressed in cochlea and utricle.

The enzyme catalyses L-seryl-[protein] + ATP = O-phospho-L-seryl-[protein] + ADP + H(+). It carries out the reaction L-threonyl-[protein] + ATP = O-phospho-L-threonyl-[protein] + ADP + H(+). With respect to regulation, homodimerization via the leucine zipper domains is required for autophosphorylation of multiple sites in the activation loop and subsequent activation. Autophosphorylation at Thr-305 is the key step in activation of MAP3K9/MLK1 and is required for full phosphorylation. Autophosphorylation at Thr-297 and Ser-301 have been shown to be of secondary importance in the activation of MAP3K9/MLK1. Functionally, serine/threonine kinase which acts as an essential component of the MAP kinase signal transduction pathway. Plays an important role in the cascades of cellular responses evoked by changes in the environment. Once activated, acts as an upstream activator of the MKK/JNK signal transduction cascade through the phosphorylation of MAP2K4/MKK4 and MAP2K7/MKK7 which in turn activate the JNKs. The MKK/JNK signaling pathway regulates stress response via activator protein-1 (JUN) and GATA4 transcription factors. Also plays a role in mitochondrial death signaling pathway, including the release cytochrome c, leading to apoptosis. The chain is Mitogen-activated protein kinase kinase kinase 9 (Map3k9) from Mus musculus (Mouse).